A 419-amino-acid chain; its full sequence is Tol-Pal system protein TolB (419 aa).

Positions Met1 to Gly17 are cleaved as a signal peptide.

The protein belongs to the TolB family. The Tol-Pal system is composed of five core proteins: the inner membrane proteins TolA, TolQ and TolR, the periplasmic protein TolB and the outer membrane protein Pal. They form a network linking the inner and outer membranes and the peptidoglycan layer.

It localises to the periplasm. Functionally, part of the Tol-Pal system, which plays a role in outer membrane invagination during cell division and is important for maintaining outer membrane integrity. The chain is Tol-Pal system protein TolB from Helicobacter hepaticus (strain ATCC 51449 / 3B1).